The following is a 400-amino-acid chain: Elongation factor Tu (400 aa).

One can recognise a tr-type G domain in the interval 10-208 (KPHVNVGTIG…AMDNYIPDPQ (199 aa)). Residues 19-26 (GHIDHGKS) are G1. A GTP-binding site is contributed by 19–26 (GHIDHGKS). Serine 26 is a Mg(2+) binding site. Positions 60 to 64 (GITIN) are G2. The interval 81-84 (DCPG) is G3. Residues 81-85 (DCPGH) and 136-139 (NKTD) contribute to the GTP site. A G4 region spans residues 136 to 139 (NKTD). The interval 174-176 (SAL) is G5.

The protein belongs to the TRAFAC class translation factor GTPase superfamily. Classic translation factor GTPase family. EF-Tu/EF-1A subfamily. In terms of assembly, monomer.

Its subcellular location is the cytoplasm. It carries out the reaction GTP + H2O = GDP + phosphate + H(+). Its function is as follows. GTP hydrolase that promotes the GTP-dependent binding of aminoacyl-tRNA to the A-site of ribosomes during protein biosynthesis. This chain is Elongation factor Tu, found in Thermotoga neapolitana (strain ATCC 49049 / DSM 4359 / NBRC 107923 / NS-E).